We begin with the raw amino-acid sequence, 446 residues long: Probable glycine dehydrogenase (decarboxylating) subunit 1 (446 aa).

Belongs to the GcvP family. N-terminal subunit subfamily. As to quaternary structure, the glycine cleavage system is composed of four proteins: P, T, L and H. In this organism, the P 'protein' is a heterodimer of two subunits.

It carries out the reaction N(6)-[(R)-lipoyl]-L-lysyl-[glycine-cleavage complex H protein] + glycine + H(+) = N(6)-[(R)-S(8)-aminomethyldihydrolipoyl]-L-lysyl-[glycine-cleavage complex H protein] + CO2. Its function is as follows. The glycine cleavage system catalyzes the degradation of glycine. The P protein binds the alpha-amino group of glycine through its pyridoxal phosphate cofactor; CO(2) is released and the remaining methylamine moiety is then transferred to the lipoamide cofactor of the H protein. This is Probable glycine dehydrogenase (decarboxylating) subunit 1 from Desulfitobacterium hafniense (strain DSM 10664 / DCB-2).